A 1007-amino-acid polypeptide reads, in one-letter code: Aldehyde reductase lnbA (1007 aa).

The segment at 35–428 (QVRQSPSSIA…GRVDHQIKVR (394 aa)) is adenylation (A) domain. Residues 540–617 (TLCQDTQTVL…ALASIIDHAK (78 aa)) enclose the Carrier domain. Position 577 is an O-(pantetheine 4'-phosphoryl)serine (Ser-577). The short-chain dehydrogenase/reductase (R) domain stretch occupies residues 659–998 (IFITGATGFV…PTLDCSLLKK (340 aa)).

The protein belongs to the NRP synthetase family.

The catalysed reaction is L-tyrosinal + AMP + diphosphate + NADP(+) = L-tyrosine + ATP + NADPH + H(+). The protein operates within secondary metabolite biosynthesis. Functionally, non-canonical nonribosomal peptide synthetase; part of the lnb gene cluster that mediates the biosynthesis of diastereomeric piperazines. Lna and lnb clusters encode sets of enzymes that produce overlapping sets of previously undescribed metabolites such as piperazinomycin-like metabolites or morpholine. The lna and lnb biosynthetic pathways appear to be part of a signaling network that controls the formation of sclerotia, a resilient overwintering structure. One primary function of the non-canonical nonribosomal peptide synthetases lnaA and lnbA consists in the reduction of L-tyrosine. The presence in the clusters of tailoring enzymes such as the oxidoreductases lnaB, lnbB, lnaE or lnbE, as well as of the cytochrome P450 monooxygenases lnaC, lnaD, or lnbC, might explain formation of various diastereomeric piperazines. The sequence is that of Aldehyde reductase lnbA from Aspergillus flavus (strain ATCC 200026 / FGSC A1120 / IAM 13836 / NRRL 3357 / JCM 12722 / SRRC 167).